Consider the following 302-residue polypeptide: Short-chain dehydrogenase/reductase 3 (302 aa).

4 consecutive transmembrane segments (helical) span residues 9 to 29 (LVMF…GLVL), 170 to 190 (IVCL…DYCT), 195 to 215 (AFAF…VSAT), and 253 to 273 (AVQL…LVIL). Ser-175 contacts substrate. Tyr-188 acts as the Proton acceptor in catalysis.

This sequence belongs to the short-chain dehydrogenases/reductases (SDR) family. In terms of tissue distribution, widely expressed with highest levels found in heart, placenta, lung, liver, kidney, pancreas, thyroid, testis, stomach, trachea and spinal cord. Lower levels found in skeletal muscle, intestine and lymph node. No expression detected in brain. In the retina, expressed in cone but not rod outer segments.

Its subcellular location is the membrane. The enzyme catalyses all-trans-retinol + NADP(+) = all-trans-retinal + NADPH + H(+). Catalyzes the reduction of all-trans-retinal to all-trans-retinol in the presence of NADPH. The polypeptide is Short-chain dehydrogenase/reductase 3 (DHRS3) (Homo sapiens (Human)).